The sequence spans 282 residues: Tumor necrosis factor ligand superfamily member 6 (282 aa).

Over Met-1–Leu-82 the chain is Cytoplasmic. The disordered stretch occupies residues Phe-30–Lys-73. The span at Arg-43–Ser-71 shows a compositional bias: pro residues. The helical; Signal-anchor for type II membrane protein transmembrane segment at Cys-83–Phe-103 threads the bilayer. Residues Gln-104 to Leu-282 are Extracellular-facing. Over residues Ala-119 to Ile-132 the composition is skewed to basic and acidic residues. The tract at residues Ala-119–Glu-140 is disordered. The THD domain occupies Lys-146–Leu-282. N-linked (GlcNAc...) asparagine glycosylation is present at Asn-185. An intrachain disulfide couples Cys-203 to Cys-234. N-linked (GlcNAc...) asparagine glycans are attached at residues Asn-251 and Asn-261.

The protein belongs to the tumor necrosis factor family. In terms of assembly, homotrimer. Interacts with ARHGAP9, BAIAP2L1, BTK, CACNB3, CACNB4, CRK, DLG2, DNMBP, DOCK4, EPS8L3, FGR, FYB1, FYN, HCK, ITK, ITSN2, KALRN, LYN, MACC1, MIA, MPP4, MYO15A, NCF1, NCK1, NCK2, NCKIPSD, OSTF1, PIK3R1, PSTPIP1, RIMBP3C, SAMSN1, SH3GL3, SH3PXD2B, SH3PXD2A, SH3RF2, SKAP2, SNX33, SNX9, SORBS3, SPTA1, SRC, SRGAP1, SRGAP2, SRGAP3, TEC, TJP3 and YES1. Post-translationally, the soluble form derives from the membrane form by proteolytic processing. The membrane-bound form undergoes two successive intramembrane proteolytic cleavages. The first one is processed by ADAM10 producing an N-terminal fragment, which lacks the receptor-binding extracellular domain. This ADAM10-processed FasL (FasL APL) remnant form is still membrane anchored and further processed by SPPL2A that liberates the FasL intracellular domain (FasL ICD). FasL shedding by ADAM10 is a prerequisite for subsequent intramembrane cleavage by SPPL2A in T-cells. In terms of processing, phosphorylated by FGR on tyrosine residues; this is required for ubiquitination and subsequent internalization. N-glycosylated. Glycosylation enhances apoptotic activity. Post-translationally, monoubiquitinated.

The protein resides in the cell membrane. The protein localises to the cytoplasmic vesicle lumen. It is found in the lysosome lumen. Its subcellular location is the secreted. It localises to the nucleus. In terms of biological role, cytokine that binds to TNFRSF6/FAS, a receptor that transduces the apoptotic signal into cells. Involved in cytotoxic T-cell-mediated apoptosis, natural killer cell-mediated apoptosis and in T-cell development. Initiates fratricidal/suicidal activation-induced cell death (AICD) in antigen-activated T-cells contributing to the termination of immune responses. TNFRSF6/FAS-mediated apoptosis also has a role in the induction of peripheral tolerance. Binds to TNFRSF6B/DcR3, a decoy receptor that blocks apoptosis. Its function is as follows. Induces FAS-mediated activation of NF-kappa-B, initiating non-apoptotic signaling pathways. Can induce apoptosis but does not appear to be essential for this process. Functionally, cytoplasmic form induces gene transcription inhibition. This is Tumor necrosis factor ligand superfamily member 6 (FASLG) from Sus scrofa (Pig).